Consider the following 191-residue polypeptide: Leucyl/phenylalanyl-tRNA--protein transferase (191 aa).

It belongs to the L/F-transferase family.

The protein localises to the cytoplasm. The enzyme catalyses N-terminal L-lysyl-[protein] + L-leucyl-tRNA(Leu) = N-terminal L-leucyl-L-lysyl-[protein] + tRNA(Leu) + H(+). The catalysed reaction is N-terminal L-arginyl-[protein] + L-leucyl-tRNA(Leu) = N-terminal L-leucyl-L-arginyl-[protein] + tRNA(Leu) + H(+). It catalyses the reaction L-phenylalanyl-tRNA(Phe) + an N-terminal L-alpha-aminoacyl-[protein] = an N-terminal L-phenylalanyl-L-alpha-aminoacyl-[protein] + tRNA(Phe). Its function is as follows. Functions in the N-end rule pathway of protein degradation where it conjugates Leu, Phe and, less efficiently, Met from aminoacyl-tRNAs to the N-termini of proteins containing an N-terminal arginine or lysine. The sequence is that of Leucyl/phenylalanyl-tRNA--protein transferase from Herpetosiphon aurantiacus (strain ATCC 23779 / DSM 785 / 114-95).